The following is a 165-amino-acid chain: Lipoprotein signal peptidase (165 aa).

3 helical membrane passes run 9 to 29 (SFLWLSAVTFLLDLSSKYFVV), 65 to 85 (WQKYFFIVLAIAISLMLCYFL), and 100 to 120 (ALIIGGALGNMIDRLYHGFVV). Active-site residues include Asp-121 and Asp-139. A helical transmembrane segment spans residues 134–154 (VFNVADIAISLGAGLMILDAF).

This sequence belongs to the peptidase A8 family.

The protein resides in the cell inner membrane. It carries out the reaction Release of signal peptides from bacterial membrane prolipoproteins. Hydrolyzes -Xaa-Yaa-Zaa-|-(S,diacylglyceryl)Cys-, in which Xaa is hydrophobic (preferably Leu), and Yaa (Ala or Ser) and Zaa (Gly or Ala) have small, neutral side chains.. Its pathway is protein modification; lipoprotein biosynthesis (signal peptide cleavage). Functionally, this protein specifically catalyzes the removal of signal peptides from prolipoproteins. This Pasteurella multocida (strain Pm70) protein is Lipoprotein signal peptidase.